Consider the following 387-residue polypeptide: GTPase Obg (387 aa).

The region spanning 1–159 is the Obg domain; sequence MKFVDEAIIR…RSLKLELLLL (159 aa). The 174-residue stretch at 160–333 folds into the OBG-type G domain; sequence ADVGLLGMPN…LALKLLDFID (174 aa). GTP contacts are provided by residues 166–173, 191–195, 213–216, 283–286, and 314–316; these read GMPNAGKS, FTTLV, DIPG, NKAD, and SAY. Mg(2+) contacts are provided by Ser173 and Thr193.

Belongs to the TRAFAC class OBG-HflX-like GTPase superfamily. OBG GTPase family. Monomer. It depends on Mg(2+) as a cofactor.

The protein localises to the cytoplasm. Its function is as follows. An essential GTPase which binds GTP, GDP and possibly (p)ppGpp with moderate affinity, with high nucleotide exchange rates and a fairly low GTP hydrolysis rate. Plays a role in control of the cell cycle, stress response, ribosome biogenesis and in those bacteria that undergo differentiation, in morphogenesis control. The protein is GTPase Obg of Shewanella pealeana (strain ATCC 700345 / ANG-SQ1).